A 370-amino-acid chain; its full sequence is uncharacterized protein (370 aa).

A divalent metal cation-binding residues include Asp152, His154, Asp184, Asn215, His306, and His308.

It belongs to the metallophosphoesterase superfamily. A divalent metal cation serves as cofactor.

This is an uncharacterized protein from Helicobacter pylori (strain ATCC 700392 / 26695) (Campylobacter pylori).